We begin with the raw amino-acid sequence, 291 residues long: Probable cell wall amidase LytH (291 aa).

Residues 1-40 form the signal peptide; sequence MKKIEAWLSKKGLKNKRTLIVVIAFVLFIIFLFLLLNSNS. In terms of domain architecture, SH3b spans 41 to 105; that stretch reads EDSGNITITE…WIAGWHTNLD (65 aa). The segment at 118-140 is disordered; it reads QGKTIVLDPGHGGSDQGASSNTK. A MurNAc-LAA domain is found at 122 to 286; sequence IVLDPGHGGS…LEQAIVDGLK (165 aa).

This sequence belongs to the N-acetylmuramoyl-L-alanine amidase 3 family.

The protein localises to the secreted. Its function is as follows. Probably involved in cell-wall metabolism. The chain is Probable cell wall amidase LytH (lytH) from Staphylococcus aureus (strain USA300).